The primary structure comprises 271 residues: Membrane protein insertase YidC 1 (271 aa).

An N-terminal signal peptide occupies residues 1 to 20 (MKKKLKTFSLILLTGSLLVA). Cys-21 is lipidated: N-palmitoyl cysteine. A lipid anchor (S-diacylglycerol cysteine) is attached at Cys-21. A run of 4 helical transmembrane segments spans residues 45–65 (IQWL…TLII), 124–144 (YASV…FQAL), 163–183 (PDPY…STWL), and 201–221 (VMPF…VLYW).

This sequence belongs to the OXA1/ALB3/YidC family. Type 2 subfamily.

The protein localises to the cell membrane. Functionally, required for the insertion and/or proper folding and/or complex formation of integral membrane proteins into the membrane. Involved in integration of membrane proteins that insert both dependently and independently of the Sec translocase complex, as well as at least some lipoproteins. The chain is Membrane protein insertase YidC 1 from Streptococcus agalactiae serotype III (strain NEM316).